Here is a 335-residue protein sequence, read N- to C-terminus: Phosphate acyltransferase (335 aa).

It belongs to the PlsX family. As to quaternary structure, homodimer. Probably interacts with PlsY.

It localises to the cytoplasm. It catalyses the reaction a fatty acyl-[ACP] + phosphate = an acyl phosphate + holo-[ACP]. The protein operates within lipid metabolism; phospholipid metabolism. Its function is as follows. Catalyzes the reversible formation of acyl-phosphate (acyl-PO(4)) from acyl-[acyl-carrier-protein] (acyl-ACP). This enzyme utilizes acyl-ACP as fatty acyl donor, but not acyl-CoA. This is Phosphate acyltransferase from Clostridium botulinum (strain ATCC 19397 / Type A).